A 237-amino-acid polypeptide reads, in one-letter code: Beta-glucanase (237 aa).

Residues methionine 1–alanine 23 form the signal peptide. The GH16 domain maps to valine 28–asparagine 237. Cysteine 55 and cysteine 84 are oxidised to a cystine. Residue glutamate 128 is the Nucleophile of the active site. The active-site Proton donor is the glutamate 132.

It belongs to the glycosyl hydrolase 16 family.

It carries out the reaction Hydrolysis of (1-&gt;4)-beta-D-glucosidic linkages in beta-D-glucans containing (1-&gt;3)- and (1-&gt;4)-bonds.. In Paenibacillus macerans (Bacillus macerans), this protein is Beta-glucanase.